Here is a 259-residue protein sequence, read N- to C-terminus: NAD(P)H-quinone oxidoreductase subunit K 2 (259 aa).

[4Fe-4S] cluster contacts are provided by Cys52, Cys53, Cys117, and Cys148.

It belongs to the complex I 20 kDa subunit family. NDH-1 can be composed of about 15 different subunits; different subcomplexes with different compositions have been identified which probably have different functions. Requires [4Fe-4S] cluster as cofactor.

The protein localises to the cellular thylakoid membrane. It catalyses the reaction a plastoquinone + NADH + (n+1) H(+)(in) = a plastoquinol + NAD(+) + n H(+)(out). The enzyme catalyses a plastoquinone + NADPH + (n+1) H(+)(in) = a plastoquinol + NADP(+) + n H(+)(out). Functionally, NDH-1 shuttles electrons from an unknown electron donor, via FMN and iron-sulfur (Fe-S) centers, to quinones in the respiratory and/or the photosynthetic chain. The immediate electron acceptor for the enzyme in this species is believed to be plastoquinone. Couples the redox reaction to proton translocation, and thus conserves the redox energy in a proton gradient. Cyanobacterial NDH-1 also plays a role in inorganic carbon-concentration. This chain is NAD(P)H-quinone oxidoreductase subunit K 2 (ndhK2), found in Cyanothece sp. (strain PCC 7425 / ATCC 29141).